Reading from the N-terminus, the 122-residue chain is uncharacterized protein (122 aa).

This is an uncharacterized protein from Homo sapiens (Human).